We begin with the raw amino-acid sequence, 183 residues long: Putative manganese efflux pump MntP (183 aa).

6 helical membrane-spanning segments follow: residues 8-28 (IIAL…VALG), 40-60 (FYIG…GMAV), 72-92 (ATYA…IASF), 108-128 (LFFA…LGIF), 133-153 (MVTI…GLFV), and 163-183 (SYSE…LLFL).

It belongs to the MntP (TC 9.B.29) family.

The protein localises to the cell membrane. Probably functions as a manganese efflux pump. The sequence is that of Putative manganese efflux pump MntP from Geobacillus kaustophilus (strain HTA426).